The sequence spans 270 residues: NAD kinase (270 aa).

Residue Asp49 is the Proton acceptor of the active site. NAD(+)-binding positions include 49 to 50, Arg54, 126 to 127, Arg152, Asp154, 165 to 170, Ala189, and Gln227; these read DG, NE, and TAYNKS.

It belongs to the NAD kinase family. It depends on a divalent metal cation as a cofactor.

Its subcellular location is the cytoplasm. The catalysed reaction is NAD(+) + ATP = ADP + NADP(+) + H(+). In terms of biological role, involved in the regulation of the intracellular balance of NAD and NADP, and is a key enzyme in the biosynthesis of NADP. Catalyzes specifically the phosphorylation on 2'-hydroxyl of the adenosine moiety of NAD to yield NADP. The sequence is that of NAD kinase from Lactococcus lactis subsp. cremoris (strain MG1363).